Reading from the N-terminus, the 248-residue chain is Anamorsin homolog (248 aa).

The N-terminal SAM-like domain stretch occupies residues 4–130 (FKGLQKSLYI…ETGSSARLSF (127 aa)). The tract at residues 131–161 (AKKTSSVNVWKISGDDEELIDEEELLDEEDK) is linker. [2Fe-2S] cluster-binding residues include Cys-172, Cys-181, Cys-184, and Cys-186. The segment at 172 to 186 (CSTTGKRKACKNCSC) is fe-S binding site A. The [4Fe-4S] cluster site is built by Cys-209, Cys-212, Cys-220, and Cys-223. 2 consecutive short sequence motifs (cx2C motif) follow at residues 209-212 (CGNC) and 220-223 (CSTC). The interval 209–223 (CGNCYLGDAFRCSTC) is fe-S binding site B.

The protein belongs to the anamorsin family. In terms of assembly, monomer. [2Fe-2S] cluster is required as a cofactor. [4Fe-4S] cluster serves as cofactor.

It is found in the cytoplasm. It localises to the mitochondrion intermembrane space. Functionally, component of the cytosolic iron-sulfur (Fe-S) protein assembly (CIA) machinery. Required for the maturation of extramitochondrial Fe-S proteins. Part of an electron transfer chain functioning in an early step of cytosolic Fe-S biogenesis, facilitating the de novo assembly of a [4Fe-4S] cluster on the cytosolic Fe-S scaffold complex. Electrons are transferred from NADPH via a FAD- and FMN-containing diflavin oxidoreductase. Together with the diflavin oxidoreductase, also required for the assembly of the diferric tyrosyl radical cofactor of ribonucleotide reductase (RNR), probably by providing electrons for reduction during radical cofactor maturation in the catalytic small subunit. This chain is Anamorsin homolog, found in Drosophila virilis (Fruit fly).